A 674-amino-acid chain; its full sequence is DNA ligase (674 aa).

Residues 35–39, 82–83, and E116 each bind NAD(+); these read DAEYD and SL. The active-site N6-AMP-lysine intermediate is K118. 4 residues coordinate NAD(+): R139, E174, K282, and K306. Residues C400, C403, C418, and C424 each coordinate Zn(2+). The region spanning 593–674 is the BRCT domain; it reads SYVSLIHGKT…WLQYIQPNKV (82 aa).

Belongs to the NAD-dependent DNA ligase family. LigA subfamily. Requires Mg(2+) as cofactor. Mn(2+) is required as a cofactor.

It catalyses the reaction NAD(+) + (deoxyribonucleotide)n-3'-hydroxyl + 5'-phospho-(deoxyribonucleotide)m = (deoxyribonucleotide)n+m + AMP + beta-nicotinamide D-nucleotide.. In terms of biological role, DNA ligase that catalyzes the formation of phosphodiester linkages between 5'-phosphoryl and 3'-hydroxyl groups in double-stranded DNA using NAD as a coenzyme and as the energy source for the reaction. It is essential for DNA replication and repair of damaged DNA. The polypeptide is DNA ligase (Ehrlichia ruminantium (strain Welgevonden)).